The following is a 448-amino-acid chain: Putative diacyglycerol O-acyltransferase MT3848 (448 aa).

The active-site Proton acceptor is His-136.

It belongs to the long-chain O-acyltransferase family.

The enzyme catalyses an acyl-CoA + a 1,2-diacyl-sn-glycerol = a triacyl-sn-glycerol + CoA. It functions in the pathway glycerolipid metabolism; triacylglycerol biosynthesis. The sequence is that of Putative diacyglycerol O-acyltransferase MT3848 from Mycobacterium tuberculosis (strain CDC 1551 / Oshkosh).